A 673-amino-acid chain; its full sequence is Pesticin receptor (673 aa).

Positions Met-1–Ala-22 are cleaved as a signal peptide. Positions Ser-30–Ser-37 match the TonB box motif. One can recognise a TBDR plug domain in the interval Ser-41–Gln-155. The TBDR beta-barrel domain maps to Thr-160–Phe-672. Positions Gln-657–Phe-673 match the TonB C-terminal box motif.

It belongs to the TonB-dependent receptor family.

Its subcellular location is the cell outer membrane. Receptor for the bacteriocin pesticin and for the siderophore yersiniabactin. This chain is Pesticin receptor (fyuA), found in Yersinia enterocolitica.